A 199-amino-acid polypeptide reads, in one-letter code: Protein-methionine-sulfoxide reductase heme-binding subunit MsrQ (199 aa).

Transmembrane regions (helical) follow at residues 10 to 30, 82 to 102, 116 to 136, and 153 to 173; these read WLKVCLHLAGFLPLLWLFWAI, LWCFVWATLHLTSYALLELGI, PYLTLGIISWLVLLALTLTST, and VVYLVAILAPIHYLWSVKILS.

It belongs to the MsrQ family. In terms of assembly, heterodimer of a catalytic subunit (MsrP) and a heme-binding subunit (MsrQ). FMN serves as cofactor. It depends on heme b as a cofactor.

It is found in the cell inner membrane. In terms of biological role, part of the MsrPQ system that repairs oxidized periplasmic proteins containing methionine sulfoxide residues (Met-O), using respiratory chain electrons. Thus protects these proteins from oxidative-stress damage caused by reactive species of oxygen and chlorine generated by the host defense mechanisms. MsrPQ is essential for the maintenance of envelope integrity under bleach stress, rescuing a wide series of structurally unrelated periplasmic proteins from methionine oxidation, including the primary periplasmic chaperone SurA and the lipoprotein Pal. MsrQ provides electrons for reduction to the reductase catalytic subunit MsrP, using the quinone pool of the respiratory chain. In Salmonella newport (strain SL254), this protein is Protein-methionine-sulfoxide reductase heme-binding subunit MsrQ.